Here is a 134-residue protein sequence, read N- to C-terminus: RxLR effector protein 4 (134 aa).

Residues 1-22 (MRSLFYIAVAVAVFARSSAVAA) form the signal peptide. Positions 43–65 (AMASSDSRKRFLRATDPEDGDLQ) are disordered. A compositionally biased stretch (basic and acidic residues) spans 48-58 (DSRKRFLRATD). Residues 52-71 (RFLRATDPEDGDLQADDEER) carry the RxLR-dEER motif.

This sequence belongs to the RxLR effector family.

The protein resides in the secreted. In terms of biological role, effector that enhances plant susceptibility to P.parasitica in Nicotiana benthamiana and Arabidopsis thaliana. Triggers non-specific cell death in a variety of plants, including tobacco, tomato, potato and A.thaliana. E4-induced cell death is dependent on HSP90, NPK and SGT1, suggesting that PpE4 is recognized by the plant immune system. In Phytophthora nicotianae (strain INRA-310) (Phytophthora parasitica), this protein is RxLR effector protein 4.